A 214-amino-acid chain; its full sequence is Probable DNA (cytosine-5)-methyltransferase (214 aa).

The active site involves cysteine 62.

The protein belongs to the class I-like SAM-binding methyltransferase superfamily. C5-methyltransferase family. Probably requires another subunit for function.

It carries out the reaction a 2'-deoxycytidine in DNA + S-adenosyl-L-methionine = a 5-methyl-2'-deoxycytidine in DNA + S-adenosyl-L-homocysteine + H(+). In terms of biological role, this is probably the methylase that recognizes and modifies 5'-CpG-3'. This chain is Probable DNA (cytosine-5)-methyltransferase, found in Dryophytes versicolor (chameleon treefrog).